A 214-amino-acid chain; its full sequence is Small ribosomal subunit protein eS1 (214 aa).

This sequence belongs to the eukaryotic ribosomal protein eS1 family.

In Aeropyrum pernix (strain ATCC 700893 / DSM 11879 / JCM 9820 / NBRC 100138 / K1), this protein is Small ribosomal subunit protein eS1.